A 1138-amino-acid chain; its full sequence is Nuclear pore complex-interacting protein family member B4 (1138 aa).

The helical transmembrane segment at 63-87 (VIIAFPTSYKVVITLWIVYLWVSLL) threads the bilayer. Disordered stretches follow at residues 241-263 (NRMG…SLSL), 291-620 (TPLP…NIKT), and 873-1138 (ERLR…RRLS). Polar residues predominate over residues 252–262 (QQHSITDNSLS). Residues 349 to 359 (PLPPSALPSAP) are compositionally biased toward pro residues. Basic and acidic residues-rich tracts occupy residues 406 to 416 (DNIKTPAERLR), 448 to 458 (DNIKTPAERLR), 490 to 500 (DNIKTPAERLR), 532 to 542 (DNIKTPAERLR), 574 to 584 (DNIKTPAERLR), 908 to 918 (DNIKTPAERLR), 950 to 960 (DNIKTPAERLR), and 992 to 1002 (DNIKTPAERLR).

The protein belongs to the NPIP family.

Its subcellular location is the membrane. The chain is Nuclear pore complex-interacting protein family member B4 (NPIPB4) from Homo sapiens (Human).